Reading from the N-terminus, the 690-residue chain is Potassium-transporting ATPase ATP-binding subunit (690 aa).

The next 4 membrane-spanning stretches (helical) occupy residues 49–69 (SPVMLVVELTAVLTTLLCFVP), 72–92 (AVPTSVALQIALWLWFTVLFA), 229–249 (VALDILLIGLTLIFLLVVVTL), and 253–273 (ALFAGGNLPLVFLVALLVTLI). Residue Asp317 is the 4-aspartylphosphate intermediate of the active site. Residues Asp354, Glu358, 385-392 (FSAETRLS), and Lys403 contribute to the ATP site. Residues Asp526 and Asp530 each coordinate Mg(2+). 3 helical membrane-spanning segments follow: residues 596-616 (FAILPALFVGIYPQLDVLNVM), 624-644 (AILSAIVFNALIIVALIPLAL), and 662-682 (LLIYGVGGLVAPFLGIKAIDL).

The protein belongs to the cation transport ATPase (P-type) (TC 3.A.3) family. Type IA subfamily. In terms of assembly, the system is composed of three essential subunits: KdpA, KdpB and KdpC.

The protein localises to the cell inner membrane. The catalysed reaction is K(+)(out) + ATP + H2O = K(+)(in) + ADP + phosphate + H(+). Functionally, part of the high-affinity ATP-driven potassium transport (or Kdp) system, which catalyzes the hydrolysis of ATP coupled with the electrogenic transport of potassium into the cytoplasm. This subunit is responsible for energy coupling to the transport system and for the release of the potassium ions to the cytoplasm. The sequence is that of Potassium-transporting ATPase ATP-binding subunit from Pseudomonas aeruginosa (strain ATCC 15692 / DSM 22644 / CIP 104116 / JCM 14847 / LMG 12228 / 1C / PRS 101 / PAO1).